Consider the following 64-residue polypeptide: DNA gyrase inhibitor YacG (64 aa).

Zn(2+) is bound by residues Cys9, Cys12, Cys28, and Cys32. The interval 42-64 (DEENAIPGAPDMSDSDGWSEEQY) is disordered. Acidic residues predominate over residues 54–64 (SDSDGWSEEQY).

It belongs to the DNA gyrase inhibitor YacG family. As to quaternary structure, interacts with GyrB. Zn(2+) is required as a cofactor.

Its function is as follows. Inhibits all the catalytic activities of DNA gyrase by preventing its interaction with DNA. Acts by binding directly to the C-terminal domain of GyrB, which probably disrupts DNA binding by the gyrase. The sequence is that of DNA gyrase inhibitor YacG from Vibrio vulnificus (strain CMCP6).